The following is a 453-amino-acid chain: Sodium/alanine symporter AgcS (453 aa).

At M1–P17 the chain is on the extracellular side. Residues Y18–L32 form a helical membrane-spanning segment. Topologically, residues R33–A67 are cytoplasmic. A helical transmembrane segment spans residues L68–V89. T75 provides a ligand contact to D-alanine. Positions 75 and 79 each coordinate L-alanine. N80 is a binding site for D-alanine. Residues L90–G92 are Extracellular-facing. Residues P93–Y111 traverse the membrane as a helical segment. The Cytoplasmic portion of the chain corresponds to A112–K148. The chain crosses the membrane as a helical span at residues I149–A179. Position 170 (Q170) interacts with D-alanine. Q170 contacts L-alanine. Residues S180–P186 lie on the Extracellular side of the membrane. Residues L187–L202 form a helical membrane-spanning segment. The Cytoplasmic segment spans residues G203–K206. The chain crosses the membrane as a helical span at residues S207 to M233. The Extracellular segment spans residues N234–A258. The chain crosses the membrane as a helical span at residues L259–S274. F273 to S274 serves as a coordination point for D-alanine. F273–E276 contributes to the L-alanine binding site. The Cytoplasmic segment spans residues N275–V300. The helical transmembrane segment at S301–I322 threads the bilayer. Over A323–M350 the chain is Extracellular. A helical membrane pass occupies residues G351–F378. The Cytoplasmic portion of the chain corresponds to E379–G386. Residues I387–T403 traverse the membrane as a helical segment. The Extracellular segment spans residues A404 to L408. A helical membrane pass occupies residues V409–L430. The Cytoplasmic segment spans residues L431–A453.

It belongs to the alanine or glycine:cation symporter (AGCS) (TC 2.A.25) family.

The protein resides in the cell membrane. It catalyses the reaction D-alanine(in) + Na(+)(in) = D-alanine(out) + Na(+)(out). The catalysed reaction is L-alanine(in) + Na(+)(in) = L-alanine(out) + Na(+)(out). The enzyme catalyses glycine(in) + Na(+)(in) = glycine(out) + Na(+)(out). Catalyzes the sodium-dependent uptake of extracellular D-alanine and L-alanine. Can also transport glycine. Binds glycine and both enantiomers of alanine, while strictly excluding other amino acids. In Methanococcus maripaludis (strain DSM 14266 / JCM 13030 / NBRC 101832 / S2 / LL), this protein is Sodium/alanine symporter AgcS.